The primary structure comprises 125 residues: Large ribosomal subunit protein eL31 (125 aa).

It belongs to the eukaryotic ribosomal protein eL31 family. In terms of assembly, component of the large ribosomal subunit.

The protein localises to the cytoplasm. Functionally, component of the large ribosomal subunit. The ribosome is a large ribonucleoprotein complex responsible for the synthesis of proteins in the cell. This is Large ribosomal subunit protein eL31 (rpl31) from Ictalurus punctatus (Channel catfish).